A 173-amino-acid chain; its full sequence is NADH-ubiquinone oxidoreductase chain 6 (173 aa).

The next 5 helical transmembrane spans lie at 1–21, 25–45, 53–73, 87–107, and 139–159; these read MAYI…SVAS, PYFA…VLMG, LVLF…CAAL, VLGS…WFWG, and LGGG…LVVL.

Belongs to the complex I subunit 6 family.

The protein localises to the mitochondrion membrane. The catalysed reaction is a ubiquinone + NADH + 5 H(+)(in) = a ubiquinol + NAD(+) + 4 H(+)(out). In terms of biological role, core subunit of the mitochondrial membrane respiratory chain NADH dehydrogenase (Complex I) that is believed to belong to the minimal assembly required for catalysis. Complex I functions in the transfer of electrons from NADH to the respiratory chain. The immediate electron acceptor for the enzyme is believed to be ubiquinone. This is NADH-ubiquinone oxidoreductase chain 6 (MT-ND6) from Gadus morhua (Atlantic cod).